A 478-amino-acid polypeptide reads, in one-letter code: Putative sulfate transporter YbaR (478 aa).

Helical transmembrane passes span 19 to 39 (ILAG…FSII), 42 to 62 (VDPM…SIFG), 65 to 85 (PGMI…LVAD), 87 to 107 (GLQY…ILGI), 121 to 141 (VMIG…LPQF), 143 to 163 (GASW…YVLP), 168 to 188 (AVPS…TFHV), 220 to 240 (IIFP…LLTA), 259 to 279 (GQGI…CAMI), 295 to 315 (SAFV…HVVV), 345 to 365 (APLT…VTDD), and 366 to 386 (LSKG…AKIS). In terms of domain architecture, STAS spans 389 to 478 (KIVSHAEDQK…ASKSLMKQMA (90 aa)).

This sequence belongs to the SLC26A/SulP transporter (TC 2.A.53) family.

It localises to the cell membrane. This is Putative sulfate transporter YbaR (ybaR) from Bacillus subtilis (strain 168).